The following is a 353-amino-acid chain: sn-glycerol-3-phosphate import ATP-binding protein UgpC 3 (353 aa).

Positions 4 to 235 constitute an ABC transporter domain; that stretch reads IALKDVRKVY…PATTFVATFI (232 aa). ATP is bound at residue 37 to 44; it reads GPSGCGKS.

Belongs to the ABC transporter superfamily. sn-glycerol-3-phosphate importer (TC 3.A.1.1.3) family. As to quaternary structure, the complex is composed of two ATP-binding proteins (UgpC), two transmembrane proteins (UgpA and UgpE) and a solute-binding protein (UgpB).

Its subcellular location is the cell inner membrane. The enzyme catalyses sn-glycerol 3-phosphate(out) + ATP + H2O = sn-glycerol 3-phosphate(in) + ADP + phosphate + H(+). Functionally, part of the ABC transporter complex UgpBAEC involved in sn-glycerol-3-phosphate (G3P) import. Responsible for energy coupling to the transport system. This Agrobacterium fabrum (strain C58 / ATCC 33970) (Agrobacterium tumefaciens (strain C58)) protein is sn-glycerol-3-phosphate import ATP-binding protein UgpC 3.